Reading from the N-terminus, the 237-residue chain is Dihydroceramide fatty acyl 2-hydroxylase FAH1 (237 aa).

2 helical membrane passes run 50-70 (LTLT…VWCI) and 80-100 (LPEI…FEYV). Positions 102, 107, 123, 126, and 127 each coordinate Zn(2+). Helical transmembrane passes span 137–157 (VFPP…AKAI) and 164–184 (PALF…HYYL). His-181, His-185, His-201, His-204, and His-205 together coordinate Zn(2+).

This sequence belongs to the sterol desaturase family. In terms of assembly, interacts with CYTB5-A, CYTB5-B, CYTB5-C and CYTB5-D. Interacts indirectly with BI-1 via CYTB5-D. Zn(2+) is required as a cofactor. Expressed in leaves, roots, flowers and seeds.

The protein resides in the endoplasmic reticulum membrane. It carries out the reaction an N-(1,2-saturated acyl)sphinganine + 2 Fe(II)-[cytochrome b5] + O2 + 2 H(+) = an N-[(2'R)-hydroxyacyl]sphinganine + 2 Fe(III)-[cytochrome b5] + H2O. Its function is as follows. Fatty acid 2-hydroxylase involved in the alpha-hydroxylation of sphingolipid-associated very long-chain fatty acids (VLCFA). Probably involved in the resistance response to oxidative stress. The polypeptide is Dihydroceramide fatty acyl 2-hydroxylase FAH1 (Arabidopsis thaliana (Mouse-ear cress)).